Reading from the N-terminus, the 271-residue chain is 4-hydroxy-tetrahydrodipicolinate reductase (271 aa).

8 to 13 (GITGRM) lines the NAD(+) pocket. R35 is an NADP(+) binding site. Residues 100–102 (GST) and 124–127 (APNM) contribute to the NAD(+) site. Catalysis depends on H157, which acts as the Proton donor/acceptor. Residue H158 coordinates (S)-2,3,4,5-tetrahydrodipicolinate. The active-site Proton donor is K161. Position 167–168 (167–168 (GT)) interacts with (S)-2,3,4,5-tetrahydrodipicolinate.

This sequence belongs to the DapB family.

The protein resides in the cytoplasm. The enzyme catalyses (S)-2,3,4,5-tetrahydrodipicolinate + NAD(+) + H2O = (2S,4S)-4-hydroxy-2,3,4,5-tetrahydrodipicolinate + NADH + H(+). The catalysed reaction is (S)-2,3,4,5-tetrahydrodipicolinate + NADP(+) + H2O = (2S,4S)-4-hydroxy-2,3,4,5-tetrahydrodipicolinate + NADPH + H(+). The protein operates within amino-acid biosynthesis; L-lysine biosynthesis via DAP pathway; (S)-tetrahydrodipicolinate from L-aspartate: step 4/4. Functionally, catalyzes the conversion of 4-hydroxy-tetrahydrodipicolinate (HTPA) to tetrahydrodipicolinate. The protein is 4-hydroxy-tetrahydrodipicolinate reductase of Myxococcus xanthus (strain DK1622).